Here is an 82-residue protein sequence, read N- to C-terminus: Small ribosomal subunit protein bS16 (82 aa).

It belongs to the bacterial ribosomal protein bS16 family.

This Acidobacterium capsulatum (strain ATCC 51196 / DSM 11244 / BCRC 80197 / JCM 7670 / NBRC 15755 / NCIMB 13165 / 161) protein is Small ribosomal subunit protein bS16.